The primary structure comprises 264 residues: NAD kinase 1 (264 aa).

The active-site Proton acceptor is Asp-45. NAD(+)-binding positions include 45-46, 122-123, Arg-148, Asp-150, 161-166, and Ala-185; these read DG, NE, and TAYNKS.

Belongs to the NAD kinase family. A divalent metal cation is required as a cofactor.

The protein resides in the cytoplasm. It carries out the reaction NAD(+) + ATP = ADP + NADP(+) + H(+). Functionally, involved in the regulation of the intracellular balance of NAD and NADP, and is a key enzyme in the biosynthesis of NADP. Catalyzes specifically the phosphorylation on 2'-hydroxyl of the adenosine moiety of NAD to yield NADP. In Listeria monocytogenes serotype 4b (strain F2365), this protein is NAD kinase 1.